A 214-amino-acid polypeptide reads, in one-letter code: Shikimate kinase (214 aa).

An ATP-binding site is contributed by 35 to 40; it reads GAGKST. Mg(2+) is bound at residue S39. 3 residues coordinate substrate: D57, R81, and G103. R141 is an ATP binding site. R160 contacts substrate.

Belongs to the shikimate kinase family. As to quaternary structure, monomer. Mg(2+) is required as a cofactor.

The protein localises to the cytoplasm. The catalysed reaction is shikimate + ATP = 3-phosphoshikimate + ADP + H(+). It participates in metabolic intermediate biosynthesis; chorismate biosynthesis; chorismate from D-erythrose 4-phosphate and phosphoenolpyruvate: step 5/7. Functionally, catalyzes the specific phosphorylation of the 3-hydroxyl group of shikimic acid using ATP as a cosubstrate. In Nitrobacter winogradskyi (strain ATCC 25391 / DSM 10237 / CIP 104748 / NCIMB 11846 / Nb-255), this protein is Shikimate kinase.